Reading from the N-terminus, the 1191-residue chain is Zinc finger protein ush (1191 aa).

Disordered regions lie at residues 1–153 (MLSS…PKYP) and 169–194 (PDAK…DTQA). Residues 19–28 (VDSRDSKDLS) show a composition bias toward basic and acidic residues. Residues 61-73 (IDDDADEDAEFEE) show a composition bias toward acidic residues. Phosphoserine occurs at positions 116 and 118. Over residues 130–151 (ATPPSEPEASPCPSPSPCPTPK) the composition is skewed to pro residues. A CCHC FOG-type 1 zinc finger spans residues 202–235 (LLKPARFMCLPCGIAFSSPSTLEAHQAYYCSHRI). 4 residues coordinate Zn(2+): Cys210, Cys213, His226, and Cys231. Residues 239 to 274 (DEAGSDKSGAGGSGATAGDAAGLTGGSTEPPAKMAR) are disordered. Over residues 254 to 266 (TAGDAAGLTGGST) the composition is skewed to low complexity. The segment at 279 to 301 (YGCTQCSYSADKKVSLNRHMRMH) adopts a C2H2-type 1 zinc-finger fold. Residues 304–338 (SPAAPTLAGLPSLLQNGIAPPGVTPNPMEDSSSQQ) are disordered. The CCHC FOG-type 2 zinc-finger motif lies at 335 to 368 (SSQQTDRYCSHCDIRFNNIKTYRAHKQHYCSSRR). Zn(2+) contacts are provided by Cys343, Cys346, His359, and Cys364. Disordered regions lie at residues 361–413 (QHYC…ARNK), 504–540 (EPER…ESAP), and 601–635 (APSL…MSPP). Residues 383 to 394 (AGSGPGSAGGSI) show a composition bias toward gly residues. Composition is skewed to low complexity over residues 509-523 (SAPS…AKSS), 602-613 (PSLPSSPSMSPS), and 620-635 (SPRS…MSPP). 2 consecutive CCHC FOG-type zinc fingers follow at residues 720–753 (YVKK…SARS) and 791–824 (PVAY…PKGG). Positions 728, 731, 744, 749, 799, 802, 815, and 820 each coordinate Zn(2+). C2H2-type zinc fingers lie at residues 882-907 (NKCP…HGTV), 910-932 (YRCS…IRTH), and 983-1006 (FNCD…KLMH). The tract at residues 1011 to 1073 (INSPSISPDT…HENNNSPIAT (63 aa)) is disordered. Phosphoserine is present on residues Ser1013, Ser1015, and Ser1017. Residues 1025 to 1040 (VTSNPTTNQHSNSDVS) are compositionally biased toward polar residues. A CCHC FOG-type 5 zinc finger spans residues 1113-1146 (AAEVMKKYCSTCDISFNYVKTYLAHKQFYCKNKP). 4 residues coordinate Zn(2+): Cys1121, Cys1124, His1137, and Cys1142. A Phosphoserine modification is found at Ser1156.

Belongs to the FOG (Friend of GATA) family. Interacts with pnr, although weak this interaction is essential. Interacts with the isoform SrpNC of srp. Interacts with CtBP corepressor. In terms of tissue distribution, first expressed in stage 5 at high levels in the primordium of the amnioserosa. Also expressed in germ band extending embryos in cells of the developing anterior and posterior midgut and in hemocyte precursors present in the cephalic mesoderm. In embryonic stage 8, it is expressed in blood cell precursors. By stage 10, it is expressed in hemocyte precursors that have spread throughout the lateral and ventral head mesoderm. By stage 11, it is expressed in the dorsal ectoderm and in precursor cells of the hemocytes and fat body. As embryogenesis proceeds, it is also expressed in stage 13 plasmatocytes migrating throughout the head mesoderm and down the ventral midline. By late embryogenesis, expression strongly decreases but remains in the dorsal ectoderm during dorsal closure, in cells within, or associated with, the central nervous system, and in plasmatocytes circulating throughout the embryonic hemolymph. During larval development, it is expressed in primary and secondary lobes of lymph glands. Expressed in the dorsal part of the thoracic imaginal disk.

The protein localises to the nucleus. Functionally, transcription regulator that modulates expression mediated by transcription factors of the GATA family such as pnr and srp. Represses transcription of proneural achaete-scute complex (AS-C), which is usually activated by pnr. Involved in cardiogenesis, blood, and eye development. During hematopoiesis, it is required to restrict the number of crystal cells, probably via its interaction with the isoform SrpNC of srp. Negatively regulates expression of sr. Probably acts by interacting with the GATA-type zinc finger of proteins such as pnr and srp, possibly antagonizing the interaction between the GATA-type zinc finger and some cofactor. The protein is Zinc finger protein ush (ush) of Drosophila melanogaster (Fruit fly).